An 81-amino-acid chain; its full sequence is Accessory gland protein Acp63F (81 aa).

Positions 1 to 16 (MKAIIVFILFISSVHA) are cleaved as a signal peptide.

Main cells of accessory gland and seminal fluid.

The protein resides in the secreted. Responsible for physiological and behavioral changes in mated female flies. This chain is Accessory gland protein Acp63F (Acp63F), found in Drosophila melanogaster (Fruit fly).